Here is a 938-residue protein sequence, read N- to C-terminus: Isoleucine--tRNA ligase (938 aa).

The 'HIGH' region signature appears at 58-68 (PYANGSIHIGH). Glu561 provides a ligand contact to L-isoleucyl-5'-AMP. A 'KMSKS' region motif is present at residues 602–606 (KMSKS). Lys605 is a binding site for ATP. The Zn(2+) site is built by Cys901, Cys904, Cys921, and Cys924.

The protein belongs to the class-I aminoacyl-tRNA synthetase family. IleS type 1 subfamily. Monomer. Zn(2+) serves as cofactor.

Its subcellular location is the cytoplasm. It carries out the reaction tRNA(Ile) + L-isoleucine + ATP = L-isoleucyl-tRNA(Ile) + AMP + diphosphate. In terms of biological role, catalyzes the attachment of isoleucine to tRNA(Ile). As IleRS can inadvertently accommodate and process structurally similar amino acids such as valine, to avoid such errors it has two additional distinct tRNA(Ile)-dependent editing activities. One activity is designated as 'pretransfer' editing and involves the hydrolysis of activated Val-AMP. The other activity is designated 'posttransfer' editing and involves deacylation of mischarged Val-tRNA(Ile). The polypeptide is Isoleucine--tRNA ligase (Klebsiella pneumoniae (strain 342)).